The primary structure comprises 501 residues: Ribose import ATP-binding protein RbsA (501 aa).

2 ABC transporter domains span residues 5 to 241 and 252 to 495; these read LQLK…VGRK and APGE…VGKL. 37–44 is a binding site for ATP; sequence GENGAGKS.

This sequence belongs to the ABC transporter superfamily. Ribose importer (TC 3.A.1.2.1) family. The complex is composed of an ATP-binding protein (RbsA), two transmembrane proteins (RbsC) and a solute-binding protein (RbsB).

The protein resides in the cell inner membrane. The catalysed reaction is D-ribose(out) + ATP + H2O = D-ribose(in) + ADP + phosphate + H(+). Part of the ABC transporter complex RbsABC involved in ribose import. Responsible for energy coupling to the transport system. The chain is Ribose import ATP-binding protein RbsA from Salmonella typhimurium (strain LT2 / SGSC1412 / ATCC 700720).